A 710-amino-acid polypeptide reads, in one-letter code: Polyribonucleotide nucleotidyltransferase (710 aa).

Residues aspartate 488 and aspartate 494 each contribute to the Mg(2+) site. The KH domain occupies 555 to 615 (PVIKVISIDP…EKVDAAIEQI (61 aa)). An S1 motif domain is found at 625–688 (GDVFSGKVTR…NLGRLQLEEF (64 aa)). Residues 688–710 (FSDSPDHKHGEKRSFKRHRKNDN) form a disordered region. Basic and acidic residues predominate over residues 691-700 (SPDHKHGEKR). Residues 701–710 (SFKRHRKNDN) are compositionally biased toward basic residues.

It belongs to the polyribonucleotide nucleotidyltransferase family. Requires Mg(2+) as cofactor.

The protein localises to the cytoplasm. It catalyses the reaction RNA(n+1) + phosphate = RNA(n) + a ribonucleoside 5'-diphosphate. In terms of biological role, involved in mRNA degradation. Catalyzes the phosphorolysis of single-stranded polyribonucleotides processively in the 3'- to 5'-direction. This is Polyribonucleotide nucleotidyltransferase from Pseudothermotoga lettingae (strain ATCC BAA-301 / DSM 14385 / NBRC 107922 / TMO) (Thermotoga lettingae).